Here is a 687-residue protein sequence, read N- to C-terminus: Epithelial splicing regulatory protein 1 (687 aa).

RRM domains follow at residues 226–303 (TIIR…KATG), 327–407 (VIVR…RSTA), and 446–526 (DCIR…QCSA).

Belongs to the ESRP family.

It is found in the nucleus. Functionally, mRNA splicing factor that regulates the formation of epithelial cell-specific isoforms. Specifically regulates the expression of FGFR2-IIIb, an epithelial cell-specific isoform of fgfr2. Acts by directly binding specific sequences in mRNAs. Binds the GU-rich sequence motifs in the ISE/ISS-3, a cis-element regulatory region present in the mRNA of fgfr2. The chain is Epithelial splicing regulatory protein 1 (esrp1) from Xenopus tropicalis (Western clawed frog).